The primary structure comprises 445 residues: MSKPIHIIGGGLAGTEAAWQLARRGLACTLHEMRPVRPTPAHQTDRLAELVCSNSLKSESESTAPWLLKEELRRLDSLLLQCAQKARVPGGHALTVDRDIFAREVTAAITAEPLITLLRDEVSSLSADAIWIVASGPLTSGPLAEEIARLTGSGRLYFYDSISPIVDAESVDTSIAWWASRYGKSTDGTDDYLNCPLDRGQYEHFVDELLKADSVSAHIPEDNTCYFEACLPIEEIARRGRDTLRFGPMKPMGLDDPRTGRRPWAVVQLRQENLRAESFNLVGFQNHMKFPEQKRVLRLIPGLQNAEFLRYGQIHRNTYINAPALLTAALNLRARPEIFFAGQISGVEGYVESIATGLMAGIHAAALATGDTPRPLPRQTALGSLCHYVSGADPKDYQPANITFDLLPQLEEAERQRLRRDKKARHALVCQRALEALEEYRHAIV.

9–14 (GGGLAG) contacts FAD.

It belongs to the MnmG family. TrmFO subfamily. Requires FAD as cofactor.

It is found in the cytoplasm. It catalyses the reaction uridine(54) in tRNA + (6R)-5,10-methylene-5,6,7,8-tetrahydrofolate + NADH + H(+) = 5-methyluridine(54) in tRNA + (6S)-5,6,7,8-tetrahydrofolate + NAD(+). The enzyme catalyses uridine(54) in tRNA + (6R)-5,10-methylene-5,6,7,8-tetrahydrofolate + NADPH + H(+) = 5-methyluridine(54) in tRNA + (6S)-5,6,7,8-tetrahydrofolate + NADP(+). Functionally, catalyzes the folate-dependent formation of 5-methyl-uridine at position 54 (M-5-U54) in all tRNAs. This Solibacter usitatus (strain Ellin6076) protein is Methylenetetrahydrofolate--tRNA-(uracil-5-)-methyltransferase TrmFO.